The sequence spans 88 residues: UPF0335 protein NGR_c28390 (88 aa).

This sequence belongs to the UPF0335 family.

The sequence is that of UPF0335 protein NGR_c28390 from Sinorhizobium fredii (strain NBRC 101917 / NGR234).